A 301-amino-acid polypeptide reads, in one-letter code: NADH-cytochrome b5 reductase 3 (301 aa).

Gly2 carries N-myristoyl glycine lipidation. Positions 40 to 152 constitute an FAD-binding FR-type domain; the sequence is DIKYPLRLID…RGPNGLLVYQ (113 aa). N6-acetyllysine is present on Lys42. Tyr43 is subject to Phosphotyrosine. Lys50 carries the N6-acetyllysine modification. FAD is bound by residues Arg92, Pro93, Tyr94, Val109, Lys111, and Phe114. Residue Lys120 is modified to N6-acetyllysine. FAD is bound by residues Lys126, Met127, Ser128, and Thr185.

It belongs to the flavoprotein pyridine nucleotide cytochrome reductase family. Component of a complex composed of cytochrome b5, NADH-cytochrome b5 reductase (CYB5R3) and MTARC2. Interacts with MTLN; the interaction is required to maintain cellular lipid composition and leads to stimulation of mitochondrial respiratory complex I activity. The cofactor is FAD. Post-translationally, myristoylated. As to expression, ubiquitously expressed. In terms of tissue distribution, expressed only in erythroid tissues, reticulocytes and liver.

It is found in the endoplasmic reticulum membrane. The protein localises to the mitochondrion outer membrane. The protein resides in the cytoplasm. The enzyme catalyses 2 Fe(III)-[cytochrome b5] + NADH = 2 Fe(II)-[cytochrome b5] + NAD(+) + H(+). Its function is as follows. Catalyzes the reduction of two molecules of cytochrome b5 using NADH as the electron donor. The polypeptide is NADH-cytochrome b5 reductase 3 (Rattus norvegicus (Rat)).